We begin with the raw amino-acid sequence, 135 residues long: Basic phospholipase A2 6 (135 aa).

Intrachain disulfides connect Cys-28/Cys-87, Cys-42/Cys-134, Cys-44/Cys-60, Cys-59/Cys-115, Cys-66/Cys-108, Cys-76/Cys-101, and Cys-94/Cys-106. The Ca(2+) site is built by Tyr-43, Gly-45, and Gly-47. His-63 is a catalytic residue. Asp-64 is a binding site for Ca(2+). Asp-109 is an active-site residue.

This sequence belongs to the phospholipase A2 family. Group I subfamily. D49 sub-subfamily. Ca(2+) serves as cofactor. In terms of tissue distribution, expressed by the venom gland.

The protein localises to the secreted. It catalyses the reaction a 1,2-diacyl-sn-glycero-3-phosphocholine + H2O = a 1-acyl-sn-glycero-3-phosphocholine + a fatty acid + H(+). Functionally, snake venom phospholipase A2 (PLA2) that inhibits neuromuscular transmission by blocking acetylcholine release from the nerve termini. PLA2 catalyzes the calcium-dependent hydrolysis of the 2-acyl groups in 3-sn-phosphoglycerides. Very weakly suppress the acetylcholine (ACh)-evoked current mediated by alpha-7-similar nAChRs in L.stagnalis neurons. This chain is Basic phospholipase A2 6, found in Bungarus fasciatus (Banded krait).